The sequence spans 105 residues: N(4)-acetylcytidine amidohydrolase (105 aa).

Positions 7–93 (TFFERFEHDI…VIAEIYPGLE (87 aa)) constitute an ASCH domain. Catalysis depends on lysine 21, which acts as the Proton acceptor. Threonine 24 functions as the Nucleophile in the catalytic mechanism. Catalysis depends on glutamate 74, which acts as the Proton donor.

This sequence belongs to the N(4)-acetylcytidine amidohydrolase family.

The enzyme catalyses N(4)-acetylcytidine + H2O = cytidine + acetate + H(+). It carries out the reaction N(4)-acetyl-2'-deoxycytidine + H2O = 2'-deoxycytidine + acetate + H(+). The catalysed reaction is N(4)-acetylcytosine + H2O = cytosine + acetate + H(+). Catalyzes the hydrolysis of N(4)-acetylcytidine (ac4C). In Shewanella baltica (strain OS185), this protein is N(4)-acetylcytidine amidohydrolase.